The following is a 261-amino-acid chain: uncharacterized protein (261 aa).

A signal peptide spans 1 to 22; the sequence is MGYSKRFALYISVMILIFAIAG. Cysteine 23 carries N-palmitoyl cysteine lipidation. Residue cysteine 23 is the site of S-diacylglycerol cysteine attachment.

This sequence belongs to the staphylococcal tandem lipoprotein family.

It is found in the cell membrane. This is an uncharacterized protein from Staphylococcus aureus (strain N315).